The chain runs to 1008 residues: RNA cytidine acetyltransferase (1008 aa).

Residues G282–L291 and R443 contribute to the ATP site. The 183-residue stretch at C531–N713 folds into the N-acetyltransferase domain. Acetyl-CoA contacts are provided by residues V601–T603, Q608–K614, and N700. At S907 the chain carries Phosphoserine. The disordered stretch occupies residues A950–I1008. Residues K970 to G982 are compositionally biased toward basic and acidic residues. Basic residues predominate over residues S989–I1008.

The protein belongs to the RNA cytidine acetyltransferase family. NAT10 subfamily. Component of the PRC1 complex (PSC, PC, PH and dRING1) in 0-12 hours Drosophila embryos. This complex is distinct from the Esc/E(z) complex, which contains many other PcG proteins like Esc, E(z), Su(z)12, HDAC1/Rpd3, Caf1-55 and probably Pho. The two complexes however cooperate and interact together during the first 3 hours of development to establish PcG silencing. Part of the small subunit (SSU) processome, composed of more than 70 proteins and the RNA chaperone small nucleolar RNA (snoRNA) U3.

It is found in the nucleus. It localises to the nucleolus. It carries out the reaction a cytidine in 18S rRNA + acetyl-CoA + ATP + H2O = an N(4)-acetylcytidine in 18S rRNA + ADP + phosphate + CoA + H(+). The catalysed reaction is a cytidine in tRNA + acetyl-CoA + ATP + H2O = an N(4)-acetylcytidine in tRNA + ADP + phosphate + CoA + H(+). In terms of biological role, RNA cytidine acetyltransferase with specificity toward both 18S rRNA and tRNAs. Catalyzes the formation of N(4)-acetylcytidine (ac4C) in 18S rRNA. Required for early nucleolar cleavages of precursor rRNA at sites A0, A1 and A2 during 18S rRNA synthesis. Catalyzes the formation of ac4C in serine and leucine tRNAs. Requires a tRNA-binding adapter protein for full tRNA acetyltransferase activity but not for 18S rRNA acetylation. Polycomb group (PcG) protein. PcG proteins act by forming multiprotein complexes, which are required to maintain the transcriptionally repressive state of homeotic genes throughout development. PcG proteins are not required to initiate repression, but to maintain it during later stages of development. They probably act via the methylation of histones, rendering chromatin heritably changed in its expressibility. Part of the small subunit (SSU) processome, first precursor of the small eukaryotic ribosomal subunit. During the assembly of the SSU processome in the nucleolus, many ribosome biogenesis factors, an RNA chaperone and ribosomal proteins associate with the nascent pre-rRNA and work in concert to generate RNA folding, modifications, rearrangements and cleavage as well as targeted degradation of pre-ribosomal RNA by the RNA exosome. The sequence is that of RNA cytidine acetyltransferase (l(1)G0020) from Drosophila melanogaster (Fruit fly).